A 513-amino-acid polypeptide reads, in one-letter code: Light-independent protochlorophyllide reductase subunit B (513 aa).

D36 is a binding site for [4Fe-4S] cluster. The Proton donor role is filled by D299. Residue 434 to 435 (GM) participates in substrate binding.

The protein belongs to the ChlB/BchB/BchZ family. As to quaternary structure, protochlorophyllide reductase is composed of three subunits; ChlL, ChlN and ChlB. Forms a heterotetramer of two ChlB and two ChlN subunits. Requires [4Fe-4S] cluster as cofactor.

The protein resides in the plastid. The protein localises to the chloroplast. It carries out the reaction chlorophyllide a + oxidized 2[4Fe-4S]-[ferredoxin] + 2 ADP + 2 phosphate = protochlorophyllide a + reduced 2[4Fe-4S]-[ferredoxin] + 2 ATP + 2 H2O. The protein operates within porphyrin-containing compound metabolism; chlorophyll biosynthesis (light-independent). Functionally, component of the dark-operative protochlorophyllide reductase (DPOR) that uses Mg-ATP and reduced ferredoxin to reduce ring D of protochlorophyllide (Pchlide) to form chlorophyllide a (Chlide). This reaction is light-independent. The NB-protein (ChlN-ChlB) is the catalytic component of the complex. The sequence is that of Light-independent protochlorophyllide reductase subunit B from Staurastrum punctulatum (Green alga).